Here is a 202-residue protein sequence, read N- to C-terminus: Small ribosomal subunit protein uS2 (202 aa).

The protein belongs to the universal ribosomal protein uS2 family. In terms of assembly, part of the 30S ribosomal subunit.

This Pyrococcus furiosus (strain ATCC 43587 / DSM 3638 / JCM 8422 / Vc1) protein is Small ribosomal subunit protein uS2.